We begin with the raw amino-acid sequence, 314 residues long: Chitinase 1 (314 aa).

Positions 1 to 26 are cleaved as a signal peptide; it reads MASVSPSSLLLLFFALLSPLLPLTSA. Positions 27–296 constitute a GH18 domain; it reads LVFREYIGSQ…NVFRYEMQAQ (270 aa). Residue glutamate 151 is the Proton donor of the active site.

This sequence belongs to the glycosyl hydrolase 18 family. Chitinase class II subfamily.

The catalysed reaction is Random endo-hydrolysis of N-acetyl-beta-D-glucosaminide (1-&gt;4)-beta-linkages in chitin and chitodextrins.. Its function is as follows. Able to cleave glycolchitin. The chain is Chitinase 1 from Tulipa saxatilis subsp. bakeri (Tulip).